The sequence spans 462 residues: Cathepsin F (462 aa).

A signal peptide spans 1–19; that stretch reads MAPLLQLLWLLTLLSTVAL. Residues 20 to 248 constitute a propeptide, activation peptide; the sequence is SPVPAKPWAD…MSPAKSINDL (229 aa). N-linked (GlcNAc...) asparagine glycans are attached at residues N35, N138, and N173. Intrachain disulfides connect C270–C311 and C304–C344. C273 is a catalytic residue. Residues N345 and N356 are each glycosylated (N-linked (GlcNAc...) asparagine). A disulfide bridge links C402 with C450. Residue H409 is part of the active site. N418 carries an N-linked (GlcNAc...) asparagine glycan. The active site involves N429.

The protein belongs to the peptidase C1 family.

Its subcellular location is the lysosome. The enzyme catalyses The recombinant enzyme cleaves synthetic substrates with Phe and Leu (better than Val) in P2, with high specificity constant (kcat/Km) comparable to that of cathepsin L.. Functionally, thiol protease which is believed to participate in intracellular degradation and turnover of proteins. Has also been implicated in tumor invasion and metastasis. The chain is Cathepsin F (Ctsf) from Mus musculus (Mouse).